A 248-amino-acid polypeptide reads, in one-letter code: Probable transcriptional regulatory protein BRADO1143 (248 aa).

This sequence belongs to the TACO1 family.

It localises to the cytoplasm. This chain is Probable transcriptional regulatory protein BRADO1143, found in Bradyrhizobium sp. (strain ORS 278).